We begin with the raw amino-acid sequence, 527 residues long: N-acetylglutamate synthase, mitochondrial (527 aa).

The transit peptide at 1 to 39 (MAKVNSGSSGCRAMVMAGQFWTKPFALSSQRSGPHRRSA) directs the protein to the mitochondrion. A disordered region spans residues 28–65 (SSQRSGPHRRSAAEVNRRMSSSRTAGHGSKTPLWSQQE). Positions 40–83 (AEVNRRMSSSRTAGHGSKTPLWSQQESYNHSSLGERSAWSNRTL) are may stabilize the oligomeric structure. The amino-acid kinase domain (AAK) stretch occupies residues 40–361 (AEVNRRMSSS…SGTLFKNGDP (322 aa)). In terms of domain architecture, N-acetyltransferase spans 360-511 (DPIRRYSSLE…FAKSHPDSFC (152 aa)). Substrate is bound by residues Lys-386, Lys-429, and 459-464 (RSRTTN).

Belongs to the acetyltransferase family. Homodimer. Homotetramer.

The protein resides in the mitochondrion matrix. It catalyses the reaction L-glutamate + acetyl-CoA = N-acetyl-L-glutamate + CoA + H(+). Inhibited by L-arginine. Functionally, plays a role in the regulation of ureagenesis by producing the essential cofactor N-acetylglutamate (NAG), thus modulating carbamoylphosphate synthase I (cps1) activity. The chain is N-acetylglutamate synthase, mitochondrial from Danio rerio (Zebrafish).